A 128-amino-acid polypeptide reads, in one-letter code: Phycoerythrin alpha-3 chain, chloroplastic (128 aa).

The N-terminal 52 residues, 1–52, are a transit peptide targeting the chloroplast; sequence MFAKTLASLAVIGSAAAYVPMMSMDMGRREVVQAGAAAAAVTPFLSGAPAGA. K56 carries the post-translational modification 5-hydroxylysine. The segment at 70 to 89 is disordered; sequence GCSRAPKESTGGKAGGQDDE. Residues C71, R73, 77 to 78, and K93 each bind 15,16-dihydrobiliverdin; that span reads ES.

This sequence belongs to the phycoerythrin family. Heterotetramer of 2 different alpha chains and 2 identical beta chains. The subunit composition could comprise of any combination of 2 out of 4 different alpha units with an invariant beta unit. Contains one covalently linked 15,16-dihydrobiliverdin chromophore.

It localises to the plastid. The protein resides in the chloroplast thylakoid membrane. Light-harvesting photosynthetic tetrapyrrole chromophore-protein from the phycobiliprotein complex. This chain is Phycoerythrin alpha-3 chain, chloroplastic (cpeA3), found in Rhodomonas sp. (strain CS 24) (Chroomonas sp. (strain CS24)).